Consider the following 243-residue polypeptide: Undecaprenyl-phosphate mannosyltransferase (243 aa).

It belongs to the glycosyltransferase 2 family.

It catalyses the reaction di-trans,octa-cis-undecaprenyl phosphate + GDP-alpha-D-mannose = D-mannosyl di-trans,octa-cis-undecaprenyl phosphate + GDP. Its function is as follows. Catalyzes the transfer of mannose from GDP-mannose to D-mannosyl-1-phosphoundecaprenol. The sequence is that of Undecaprenyl-phosphate mannosyltransferase from Micrococcus luteus (strain ATCC 4698 / DSM 20030 / JCM 1464 / CCM 169 / CCUG 5858 / IAM 1056 / NBRC 3333 / NCIMB 9278 / NCTC 2665 / VKM Ac-2230) (Micrococcus lysodeikticus).